We begin with the raw amino-acid sequence, 177 residues long: CASP-like protein 5A2 (177 aa).

The Cytoplasmic portion of the chain corresponds to 1 to 36; sequence MNASHPAVHPVGVPPAVAGQLPPRMRMKEIQGMPGT. A helical membrane pass occupies residues 37–57; it reads IGGLLLRLGQFCFALVAFSIM. Topologically, residues 58 to 68 are extracellular; it reads VSIENFSTVTA. An N-linked (GlcNAc...) asparagine glycan is attached at asparagine 62. The helical transmembrane segment at 69–89 threads the bilayer; sequence FCYLVAATVLQCLWSLALAII. At 90 to 103 the chain is on the cytoplasmic side; it reads DGYALLVKRSLRNS. A helical membrane pass occupies residues 104–124; sequence LLVSLLVVGDGVTATLTFAAA. At 125-153 the chain is on the extracellular side; that stretch reads CASAGITVLIGNDLRQCKENHCARYETAT. The chain crosses the membrane as a helical span at residues 154–174; it reads ALAFLSWFMVSLSFILTFWLL. Topologically, residues 175 to 177 are cytoplasmic; the sequence is ATR.

This sequence belongs to the Casparian strip membrane proteins (CASP) family. Homodimer and heterodimers.

Its subcellular location is the cell membrane. The polypeptide is CASP-like protein 5A2 (Ginkgo biloba (Ginkgo)).